We begin with the raw amino-acid sequence, 435 residues long: tRNA modification GTPase MnmE (435 aa).

(6S)-5-formyl-5,6,7,8-tetrahydrofolate is bound by residues Arg24, Glu85, and Arg124. The TrmE-type G domain maps to 220 to 361 (GLVFTIVGAP…LRTALAERAR (142 aa)). Asn230 lines the K(+) pocket. GTP-binding positions include 230-235 (NVGKSS), 249-255 (SAIAGTT), and 274-277 (DTAG). Ser234 provides a ligand contact to Mg(2+). Residues Ser249, Ile251, and Thr254 each coordinate K(+). Thr255 contributes to the Mg(2+) binding site. Lys435 provides a ligand contact to (6S)-5-formyl-5,6,7,8-tetrahydrofolate.

This sequence belongs to the TRAFAC class TrmE-Era-EngA-EngB-Septin-like GTPase superfamily. TrmE GTPase family. As to quaternary structure, homodimer. Heterotetramer of two MnmE and two MnmG subunits. K(+) serves as cofactor.

Its subcellular location is the cytoplasm. In terms of biological role, exhibits a very high intrinsic GTPase hydrolysis rate. Involved in the addition of a carboxymethylaminomethyl (cmnm) group at the wobble position (U34) of certain tRNAs, forming tRNA-cmnm(5)s(2)U34. This is tRNA modification GTPase MnmE from Gluconacetobacter diazotrophicus (strain ATCC 49037 / DSM 5601 / CCUG 37298 / CIP 103539 / LMG 7603 / PAl5).